The sequence spans 280 residues: Shikimate kinase (280 aa).

Residue 86-96 (PPGVGLKGSAA) participates in ATP binding.

The protein belongs to the GHMP kinase family. Archaeal shikimate kinase subfamily.

It localises to the cytoplasm. The catalysed reaction is shikimate + ATP = 3-phosphoshikimate + ADP + H(+). The protein operates within metabolic intermediate biosynthesis; chorismate biosynthesis; chorismate from D-erythrose 4-phosphate and phosphoenolpyruvate: step 5/7. In Aeropyrum pernix (strain ATCC 700893 / DSM 11879 / JCM 9820 / NBRC 100138 / K1), this protein is Shikimate kinase (aroK).